The sequence spans 183 residues: Capsid protein (183 aa).

Residues N136–C183 are disordered. Positions V149–S176 are enriched in basic residues. 3 positions are modified to phosphoserine; by host: S155, S162, and S170. Residues S155 to P161 form a 1; half-length repeat. Residues S155–Q177 are 3 X 8 AA repeats of S-P-R-R-R-[PR]-S-Q. The Bipartite nuclear localization signal motif lies at R158–R175. 2 tandem repeats follow at residues S162 to Q169 and S170 to Q177. The RNA binding stretch occupies residues Q177–C183.

This sequence belongs to the orthohepadnavirus core antigen family. Homodimerizes, then multimerizes. Interacts with cytosol exposed regions of viral L glycoprotein present in the reticulum-to-Golgi compartment. Interacts with human FLNB. Phosphorylated form interacts with host importin alpha; this interaction depends on the exposure of the NLS, which itself depends upon genome maturation and/or phosphorylation of the capsid protein. Interacts with host NUP153. Phosphorylated by host SRPK1, SRPK2, and maybe protein kinase C or GAPDH. Phosphorylation is critical for pregenomic RNA packaging. Protein kinase C phosphorylation is stimulated by HBx protein and may play a role in transport of the viral genome to the nucleus at the late step during the viral replication cycle.

It localises to the virion. Its subcellular location is the host cytoplasm. Self assembles to form an icosahedral capsid. Most capsids appear to be large particles with an icosahedral symmetry of T=4 and consist of 240 copies of capsid protein, though a fraction forms smaller T=3 particles consisting of 180 capsid proteins. Entering capsids are transported along microtubules to the nucleus. Phosphorylation of the capsid is thought to induce exposure of nuclear localization signal in the C-terminal portion of the capsid protein that allows binding to the nuclear pore complex via the importin (karyopherin-) alpha and beta. Capsids are imported in intact form through the nuclear pore into the nuclear basket, where it probably binds NUP153. Only capsids that contain the mature viral genome can release the viral DNA and capsid protein into the nucleoplasm. Immature capsids get stuck in the basket. Capsids encapsulate the pre-genomic RNA and the P protein. Pre-genomic RNA is reverse-transcribed into DNA while the capsid is still in the cytoplasm. The capsid can then either be directed to the nucleus, providing more genomes for transcription, or bud through the endoplasmic reticulum to provide new virions. The sequence is that of Capsid protein from Hylobatidae (gibbons).